Consider the following 157-residue polypeptide: Protein-export protein SecB (157 aa).

It belongs to the SecB family. As to quaternary structure, homotetramer, a dimer of dimers. One homotetramer interacts with 1 SecA dimer.

Its subcellular location is the cytoplasm. Functionally, one of the proteins required for the normal export of preproteins out of the cell cytoplasm. It is a molecular chaperone that binds to a subset of precursor proteins, maintaining them in a translocation-competent state. It also specifically binds to its receptor SecA. The chain is Protein-export protein SecB from Shewanella oneidensis (strain ATCC 700550 / JCM 31522 / CIP 106686 / LMG 19005 / NCIMB 14063 / MR-1).